The following is a 450-amino-acid chain: tRNA-2-methylthio-N(6)-dimethylallyladenosine synthase (450 aa).

Positions 7-127 (KKVFIKTYGC…LPDVLARVRG (121 aa)) constitute an MTTase N-terminal domain. 6 residues coordinate [4Fe-4S] cluster: Cys-16, Cys-52, Cys-90, Cys-168, Cys-172, and Cys-175. The region spanning 154–388 (IKRGVTAFLT…LLLKQQQGFG (235 aa)) is the Radical SAM core domain. A TRAM domain is found at 389–450 (SSLVGSTIDT…GYNSLFAELA (62 aa)).

Belongs to the methylthiotransferase family. MiaB subfamily. As to quaternary structure, monomer. [4Fe-4S] cluster is required as a cofactor.

It localises to the cytoplasm. The enzyme catalyses N(6)-dimethylallyladenosine(37) in tRNA + (sulfur carrier)-SH + AH2 + 2 S-adenosyl-L-methionine = 2-methylsulfanyl-N(6)-dimethylallyladenosine(37) in tRNA + (sulfur carrier)-H + 5'-deoxyadenosine + L-methionine + A + S-adenosyl-L-homocysteine + 2 H(+). In terms of biological role, catalyzes the methylthiolation of N6-(dimethylallyl)adenosine (i(6)A), leading to the formation of 2-methylthio-N6-(dimethylallyl)adenosine (ms(2)i(6)A) at position 37 in tRNAs that read codons beginning with uridine. This Mesorhizobium japonicum (strain LMG 29417 / CECT 9101 / MAFF 303099) (Mesorhizobium loti (strain MAFF 303099)) protein is tRNA-2-methylthio-N(6)-dimethylallyladenosine synthase.